A 283-amino-acid chain; its full sequence is Non-selective voltage-gated ion channel VDAC1 (283 aa).

Ala2 carries the N-acetylalanine modification. Lys12 is an ATP binding site. Residue Lys12 forms a Glycyl lysine isopeptide (Lys-Gly) (interchain with G-Cter in ubiquitin) linkage. Position 13 is a phosphoserine (Ser13). Residue Thr19 is modified to Phosphothreonine. Lys20 lines the ATP pocket. Lys20 is subject to N6-acetyllysine; alternate. Lys20 is subject to N6-succinyllysine; alternate. Lys20 is covalently cross-linked (Glycyl lysine isopeptide (Lys-Gly) (interchain with G-Cter in ubiquitin); alternate). 2 beta stranded membrane-spanning segments follow: residues 26-35 (LIKLDLKTKS) and 39-47 (LEFTSSGSA). Residues Lys53 and Lys61 each participate in a glycyl lysine isopeptide (Lys-Gly) (interchain with G-Cter in ubiquitin) cross-link. The beta stranded transmembrane segment at 54-64 (VTGSLETKYRW) threads the bilayer. A Phosphotyrosine modification is found at Tyr67. 3 consecutive transmembrane segments (beta stranded) span residues 69-76 (LTFTEKWN), 80-89 (TLGTEITVED), and 95-104 (LKLTFDSSFS). Residue Thr107 is modified to Phosphothreonine. The residue at position 109 (Lys109) is an N6-acetyllysine; alternate. Lys109 is covalently cross-linked (Glycyl lysine isopeptide (Lys-Gly) (interchain with G-Cter in ubiquitin); alternate). Lys110 is covalently cross-linked (Glycyl lysine isopeptide (Lys-Gly) (interchain with G-Cter in ubiquitin)). Transmembrane regions (beta stranded) follow at residues 111-120 (NAKIKTGYKR), 123-130 (INLGCDVD), 137-145 (SIRGALVLG), and 150-158 (LAGYQMNFE). A Glycyl lysine isopeptide (Lys-Gly) (interchain with G-Cter in ubiquitin) cross-link involves residue Lys161. A run of 6 beta stranded transmembrane segments spans residues 163-175 (RVTQSNFAVGYKT), 178-185 (FQLHTNVN), 189-198 (EFGGSIYQKV), 202-211 (LETAVNLAWT), 218-227 (RFGIAAKYQI), and 231-238 (ACFSAKVN). Ser193 bears the Phosphoserine; by NEK1 mark. Ser240 bears the Phosphoserine mark. Residue 242-244 (LIG) coordinates NAD(+). Residues 242–251 (LIGLGYTQTL) form a beta stranded membrane-spanning segment. At Lys252 the chain carries N6-acetyllysine. Residues 254–263 (GIKLTLSALL) form a beta stranded membrane-spanning segment. 260-264 (SALLD) is a binding site for NAD(+). An N6-acetyllysine; alternate modification is found at Lys266. Residue Lys266 forms a Glycyl lysine isopeptide (Lys-Gly) (interchain with G-Cter in ubiquitin); alternate linkage. Residues 273–282 (HKLGLGLEFQ) traverse the membrane as a beta stranded segment. Lys274 is covalently cross-linked (Glycyl lysine isopeptide (Lys-Gly) (interchain with G-Cter in ubiquitin)).

Belongs to the eukaryotic mitochondrial porin family. Homodimer and homotrimer; in response to cyclic AMP or calcium; oligomerization is required for scramblase activity. Component of the mitochondrial permeability transition pore complex (mPTPC), at least composed of SPG7, VDAC1 and PPIF. Interacts with SPG7, NIPSNAP2 and SLC25A30. Interacts with hexokinases including HK1. The HK1-VDAC1 complex interacts with ATF2. Interacts with BCL2L1. Interacts with BAK1. Interacts with RTL10/BOP (via BH3 domain). Interacts with amyloid-beta and APP; induces VDAC1 dephosphorylation. Interacts with TMEM41B. Interacts with BCAP31. Interacts with HSPA9; this interaction couples ITPR1 to VDAC1. Post-translationally, phosphorylation at Ser-193 by NEK1 promotes the closed conformational state preventing excessive mitochondrial membrane permeability and subsequent apoptotic cell death after injury. Phosphorylation by the AKT-GSK3B axis stabilizes the protein probably by preventing ubiquitin-mediated proteasomal degradation. Ubiquitinated. Undergoes monoubiquitination and polyubiquitination by PRKN; monoubiquitination at Lys-274 inhibits apoptosis, whereas polyubiquitination leads to its degradation and promotes mitophagy. Deubiquitinated by USP30. In terms of tissue distribution, predominantly in brain astrocytes.

It is found in the mitochondrion outer membrane. Its subcellular location is the cell membrane. The protein resides in the membrane raft. The enzyme catalyses chloride(in) = chloride(out). The catalysed reaction is K(+)(in) = K(+)(out). It carries out the reaction ATP(in) = ATP(out). It catalyses the reaction Ca(2+)(in) = Ca(2+)(out). The enzyme catalyses Na(+)(in) = Na(+)(out). The catalysed reaction is Mg(2+)(in) = Mg(2+)(out). It carries out the reaction L-glutamate(out) = L-glutamate(in). It catalyses the reaction dopamine(out) = dopamine(in). The enzyme catalyses acetylcholine(in) = acetylcholine(out). The catalysed reaction is Fe(III)-[cytochrome c](out) = Fe(III)-[cytochrome c](in). It carries out the reaction a 1,2-diacyl-sn-glycero-3-phosphocholine(in) = a 1,2-diacyl-sn-glycero-3-phosphocholine(out). It catalyses the reaction a 1,2-diacyl-sn-glycero-3-phospho-L-serine(in) = a 1,2-diacyl-sn-glycero-3-phospho-L-serine(out). Its activity is regulated as follows. Inhibited by nitric oxide. Non-selective voltage-gated ion channel that mediates the transport of anions and cations through the mitochondrion outer membrane and plasma membrane. The channel at the outer mitochondrial membrane allows diffusion of small hydrophilic molecules; in the plasma membrane it is involved in cell volume regulation and apoptosis. It adopts an open conformation at low or zero membrane potential and a closed conformation at potentials above 30-40 mV. The open state has a weak anion selectivity whereas the closed state is cation-selective. Binds various signaling molecules, including the sphingolipid ceramide, the phospholipid phosphatidylcholine, and the sterols cholesterol and oxysterol. In depolarized mitochondria, acts downstream of PRKN and PINK1 to promote mitophagy or prevent apoptosis; polyubiquitination by PRKN promotes mitophagy, while monoubiquitination by PRKN decreases mitochondrial calcium influx which ultimately inhibits apoptosis. May participate in the formation of the permeability transition pore complex (PTPC) responsible for the release of mitochondrial products that triggers apoptosis. May mediate ATP export from cells. Part of a complex composed of HSPA9, ITPR1 and VDAC1 that regulates mitochondrial calcium-dependent apoptosis by facilitating calcium transport from the ER lumen to the mitochondria intermembrane space thus providing calcium for the downstream calcium channel MCU that directly releases it into mitochondria matrix. Mediates cytochrome c efflux. Functionally, catalyzes the scrambling of phospholipids across the outer mitochondrial membrane; the mechanism is unrelated to channel activity and is capable of translocating both anionic and zwitterionic phospholipids. In Bos taurus (Bovine), this protein is Non-selective voltage-gated ion channel VDAC1.